The primary structure comprises 406 residues: Lysophospholipid transporter LplT (406 aa).

A run of 11 helical transmembrane segments spans residues 16 to 36, 53 to 73, 91 to 111, 139 to 159, 164 to 184, 227 to 247, 253 to 273, 285 to 305, 310 to 330, 349 to 369, and 372 to 392; these read MVAV…LLFA, ILQM…GQIA, AGAL…LVGV, MMEA…GILA, MAAL…NLFI, LFWG…PVAL, ATPT…AGAA, CLPA…QNSM, LLLI…NALL, LGEN…VKLG, and VVAV…LLWG.

The protein belongs to the major facilitator superfamily. LplT (TC 2.A.1.42) family.

It is found in the cell inner membrane. In terms of biological role, catalyzes the facilitated diffusion of 2-acyl-glycero-3-phosphoethanolamine (2-acyl-GPE) into the cell. In Yersinia pestis bv. Antiqua (strain Antiqua), this protein is Lysophospholipid transporter LplT.